The following is a 370-amino-acid chain: Proline-rich protein 5-like (370 aa).

Serine 28 is subject to Phosphoserine. Disordered regions lie at residues 312–346 (LGEE…LDSP) and 351–370 (LEDV…ASLS).

The protein belongs to the PROTOR family. As to quaternary structure, interacts with the mammalian target of rapamycin complex 2 (mTORC2) which contains MTOR, MLST8, PRR5, RICTOR, MAPKAP1 and DEPTOR. Interacts with RFFL. Interacts (via C-terminus) with ZFP36 (via C-terminus); this interaction may accelerate ZFP36-mediated mRNA decay during stress. Interacts with RICTOR. Post-translationally, ubiquitinated. Ubiquitination by RFFL promotes proteasomal degradation of PRR5L thereby modifying the substrate-specific activity of the mTORC2 complex. Ubiquitination by RFFL is stimulated by LPA/lysophosphatidic acid.

Associates with the mTORC2 complex that regulates cellular processes including survival and organization of the cytoskeleton. Regulates the activity of the mTORC2 complex in a substrate-specific manner preventing for instance the specific phosphorylation of PKCs and thereby controlling cell migration. Plays a role in the stimulation of ZFP36-mediated mRNA decay of several ZFP36-associated mRNAs, such as TNF-alpha and GM-CSF, in response to stress. Required for ZFP36 localization to cytoplasmic stress granule (SG) and P-body (PB) in response to stress. The polypeptide is Proline-rich protein 5-like (Prr5l) (Mus musculus (Mouse)).